Consider the following 103-residue polypeptide: Small ribosomal subunit protein uS10 (103 aa).

The protein belongs to the universal ribosomal protein uS10 family. As to quaternary structure, part of the 30S ribosomal subunit.

Functionally, involved in the binding of tRNA to the ribosomes. This Cellvibrio japonicus (strain Ueda107) (Pseudomonas fluorescens subsp. cellulosa) protein is Small ribosomal subunit protein uS10.